A 255-amino-acid chain; its full sequence is tRNA (guanine-N(1)-)-methyltransferase (255 aa).

Residues Gly113 and 133 to 138 (IGDYVL) each bind S-adenosyl-L-methionine.

The protein belongs to the RNA methyltransferase TrmD family. As to quaternary structure, homodimer.

The protein localises to the cytoplasm. The enzyme catalyses guanosine(37) in tRNA + S-adenosyl-L-methionine = N(1)-methylguanosine(37) in tRNA + S-adenosyl-L-homocysteine + H(+). Its function is as follows. Specifically methylates guanosine-37 in various tRNAs. The sequence is that of tRNA (guanine-N(1)-)-methyltransferase from Escherichia coli O127:H6 (strain E2348/69 / EPEC).